A 132-amino-acid chain; its full sequence is Small ribosomal subunit protein uS8 (132 aa).

The protein belongs to the universal ribosomal protein uS8 family. As to quaternary structure, part of the 30S ribosomal subunit. Contacts proteins S5 and S12.

Its function is as follows. One of the primary rRNA binding proteins, it binds directly to 16S rRNA central domain where it helps coordinate assembly of the platform of the 30S subunit. The sequence is that of Small ribosomal subunit protein uS8 from Alkaliphilus oremlandii (strain OhILAs) (Clostridium oremlandii (strain OhILAs)).